A 99-amino-acid polypeptide reads, in one-letter code: Small ribosomal subunit protein eS24 (99 aa).

This sequence belongs to the eukaryotic ribosomal protein eS24 family.

The polypeptide is Small ribosomal subunit protein eS24 (rps2e) (Thermoplasma volcanium (strain ATCC 51530 / DSM 4299 / JCM 9571 / NBRC 15438 / GSS1)).